We begin with the raw amino-acid sequence, 477 residues long: Glutamate--tRNA ligase (477 aa).

A 'HIGH' region motif is present at residues 8-18 (PSPTGTLHIGT). Positions 247–251 (KLSKR) match the 'KMSKS' region motif. Residue lysine 250 participates in ATP binding.

It belongs to the class-I aminoacyl-tRNA synthetase family. Glutamate--tRNA ligase type 1 subfamily. In terms of assembly, monomer.

The protein resides in the cytoplasm. The enzyme catalyses tRNA(Glu) + L-glutamate + ATP = L-glutamyl-tRNA(Glu) + AMP + diphosphate. Functionally, catalyzes the attachment of glutamate to tRNA(Glu) in a two-step reaction: glutamate is first activated by ATP to form Glu-AMP and then transferred to the acceptor end of tRNA(Glu). This chain is Glutamate--tRNA ligase, found in Synechococcus sp. (strain CC9902).